Here is a 224-residue protein sequence, read N- to C-terminus: Protein GrpE (224 aa).

A disordered region spans residues 1–72 (MEKERDVAQE…KAKEEQNEEL (72 aa)). Residues 10 to 19 (EQATYEQESP) are compositionally biased toward polar residues. Over residues 20-67 (NAERQEELKENEHQEKNAPEEQEKVREENGRQDAQKDEIGDPEKAKEE) the composition is skewed to basic and acidic residues.

This sequence belongs to the GrpE family. In terms of assembly, homodimer.

The protein localises to the cytoplasm. Participates actively in the response to hyperosmotic and heat shock by preventing the aggregation of stress-denatured proteins, in association with DnaK and GrpE. It is the nucleotide exchange factor for DnaK and may function as a thermosensor. Unfolded proteins bind initially to DnaJ; upon interaction with the DnaJ-bound protein, DnaK hydrolyzes its bound ATP, resulting in the formation of a stable complex. GrpE releases ADP from DnaK; ATP binding to DnaK triggers the release of the substrate protein, thus completing the reaction cycle. Several rounds of ATP-dependent interactions between DnaJ, DnaK and GrpE are required for fully efficient folding. This is Protein GrpE from Parageobacillus thermoglucosidasius (Geobacillus thermoglucosidasius).